The primary structure comprises 201 residues: ATP-dependent Clp protease proteolytic subunit (201 aa).

Residue Ser-105 is the Nucleophile of the active site. Residue His-130 is part of the active site.

This sequence belongs to the peptidase S14 family. Fourteen ClpP subunits assemble into 2 heptameric rings which stack back to back to give a disk-like structure with a central cavity, resembling the structure of eukaryotic proteasomes.

It localises to the cytoplasm. It catalyses the reaction Hydrolysis of proteins to small peptides in the presence of ATP and magnesium. alpha-casein is the usual test substrate. In the absence of ATP, only oligopeptides shorter than five residues are hydrolyzed (such as succinyl-Leu-Tyr-|-NHMec, and Leu-Tyr-Leu-|-Tyr-Trp, in which cleavage of the -Tyr-|-Leu- and -Tyr-|-Trp bonds also occurs).. Its function is as follows. Cleaves peptides in various proteins in a process that requires ATP hydrolysis. Has a chymotrypsin-like activity. Plays a major role in the degradation of misfolded proteins. In Aquifex aeolicus (strain VF5), this protein is ATP-dependent Clp protease proteolytic subunit.